The sequence spans 279 residues: Syntaxin-21 (279 aa).

The tract at residues 1–34 (MSFQDLEAGTRSPAPNRFTGGRQQRPSSRGDPSQ) is disordered. Residue S2 is modified to N-acetylserine. The Cytoplasmic segment spans residues 2–258 (SFQDLEAGTR…AKTQRSNSSL (257 aa)). Residues 21 to 31 (GRQQRPSSRGD) are compositionally biased toward polar residues. A coiled-coil region spans residues 65-94 (ELRDKLQKTRLQISELVKNTSAKLKEASEA). Positions 186 to 248 (EAIIEEREQG…TQATVQLRKA (63 aa)) constitute a t-SNARE coiled-coil homology domain. A helical; Anchor for type IV membrane protein transmembrane segment spans residues 259-279 (TCLLILIFGIVLLIVIIVVLV).

This sequence belongs to the syntaxin family. In terms of assembly, interacts with VTI11 and SYP51 to form a t-SNARE complex and with alpha-SNAP to form a 20S complex. As to expression, a high level expression is seen in the roots while a low level expression is seen in the leaves.

The protein localises to the prevacuolar compartment membrane. Functionally, may function in the docking or fusion of transport vesicles with the prevacuolar membrane. This chain is Syntaxin-21 (SYP21), found in Arabidopsis thaliana (Mouse-ear cress).